We begin with the raw amino-acid sequence, 348 residues long: UDP-3-O-acylglucosamine N-acyltransferase (348 aa).

The Proton acceptor role is filled by H257.

Belongs to the transferase hexapeptide repeat family. LpxD subfamily. In terms of assembly, homotrimer.

The catalysed reaction is a UDP-3-O-[(3R)-3-hydroxyacyl]-alpha-D-glucosamine + a (3R)-hydroxyacyl-[ACP] = a UDP-2-N,3-O-bis[(3R)-3-hydroxyacyl]-alpha-D-glucosamine + holo-[ACP] + H(+). It participates in bacterial outer membrane biogenesis; LPS lipid A biosynthesis. Functionally, catalyzes the N-acylation of UDP-3-O-acylglucosamine using 3-hydroxyacyl-ACP as the acyl donor. Is involved in the biosynthesis of lipid A, a phosphorylated glycolipid that anchors the lipopolysaccharide to the outer membrane of the cell. The protein is UDP-3-O-acylglucosamine N-acyltransferase of Bartonella quintana (strain Toulouse) (Rochalimaea quintana).